The following is a 73-amino-acid chain: Putative antitoxin VapB38 (73 aa).

In terms of biological role, probable antitoxin component of a type II toxin-antitoxin (TA) system. Its putative cognate toxin is VapC38. This chain is Putative antitoxin VapB38 (vapB38), found in Mycobacterium tuberculosis (strain ATCC 25618 / H37Rv).